A 1074-amino-acid polypeptide reads, in one-letter code: DNA annealing helicase and endonuclease ZRANB3 (1074 aa).

Positions 46 to 208 (TFALRRDGRC…FMQIEALFPQ (163 aa)) constitute a Helicase ATP-binding domain. The tract at residues 46 to 481 (TFALRRDGRC…GRKEKLQAEE (436 aa)) is DNA annealing helicase activity. Residue 59–66 (DEMGLGKT) coordinates ATP. The short motif at 157–160 (DESH) is the DEAH box element. Residues 325-481 (AVKDYIKMML…GRKEKLQAEE (157 aa)) form the Helicase C-terminal domain. A PIP-box motif is present at residues 519-526 (QRDIRSFF). Ser566 carries the post-translational modification Phosphoserine. Residues 617 to 647 (FCGEGWQCAFCTYINNSVLPYCEMCENPRGG) form a RanBP2-type zinc finger. Residues 659 to 719 (QNKNKNEKDD…RLTPQPGDEQ (61 aa)) are disordered. Basic and acidic residues-rich tracts occupy residues 662–674 (NKNE…DTSK) and 696–711 (AKSK…EDRL). An HNH domain is found at 1006–1046 (PGEGHFWQVDHIKPVSGGGGQCSLDNLQTLCTVCHRERTAQ). An endonuclease activity region spans residues 1006-1074 (PGEGHFWQVD…SDITRFLVKK (69 aa)). The APIM motif signature appears at 1069–1073 (RFLVK).

Belongs to the SNF2/RAD54 helicase family. In terms of assembly, interacts (via PIP-box and RanBP2-type zinc finger) with PCNA (when PCNA is polyubiquitinated via 'Lys-63'-linked polyubiquitin).

It localises to the nucleus. Its subcellular location is the chromosome. In terms of biological role, DNA annealing helicase and endonuclease required to maintain genome stability at stalled or collapsed replication forks by facilitating fork restart and limiting inappropriate recombination that could occur during template switching events. Recruited to the sites of stalled DNA replication by polyubiquitinated PCNA and acts as a structure-specific endonuclease that cleaves the replication fork D-loop intermediate, generating an accessible 3'-OH group in the template of the leading strand, which is amenable to extension by DNA polymerase. In addition to endonuclease activity, also catalyzes the fork regression via annealing helicase activity in order to prevent disintegration of the replication fork and the formation of double-strand breaks. The polypeptide is DNA annealing helicase and endonuclease ZRANB3 (ZRANB3) (Bos taurus (Bovine)).